The sequence spans 260 residues: HTH-type transcriptional repressor NanR (260 aa).

The HTH gntR-type domain maps to 27–95 (KKLSEMVEEE…NGERARISRP (69 aa)). Positions 55–74 (ERELMAFFNVGRPSVREALA) form a DNA-binding region, H-T-H motif.

Belongs to the NanR family.

Transcriptional repressor that controls expression of the genes required for the catabolism of sialic acids. The chain is HTH-type transcriptional repressor NanR from Edwardsiella tarda (strain FL6-60).